A 200-amino-acid polypeptide reads, in one-letter code: Recombination protein RecR (200 aa).

The C4-type zinc finger occupies 57 to 72 (CSQCRTFTEQETCAIC). In terms of domain architecture, Toprim spans 81–176 (GLLCVVEMPA…KVSRIAHGIP (96 aa)).

The protein belongs to the RecR family.

May play a role in DNA repair. It seems to be involved in an RecBC-independent recombinational process of DNA repair. It may act with RecF and RecO. In Actinobacillus succinogenes (strain ATCC 55618 / DSM 22257 / CCUG 43843 / 130Z), this protein is Recombination protein RecR.